The sequence spans 397 residues: MEVLYSLSKTLKDARDKIIEGTLYSNVSDLIQQFNQMIVTMNGNDFQTGGIGNLPIRNWTFDFGLLGTTLLNLDANYVETARTTIEYFIDFIDNVCMDEMARESQRNGVAPQSEALRKLAGIKFKRINFNNSSEYIENWNLQNRRQRTGFVFHKPNIFPYSASFTLNRSQPMHDNLMGTMWLNAGSEIQVAGFDYSCALNAPANIQQFEHIVQLRRALTTATITLLPDAERFSFPRVINSADGATTWFFNPIILRPNNVEVEFLLNGQIINTYQARFGTIIARNFDTIRLSFQLMRPPNMTPAVNALFPQAQPFQYHATVGLTLRIESAVCESVLADANETLLANVTAVRQEYAIPVGPVFPPGMNWTELITNYSPSREDNLQRVFTVASIRSMLIK.

Positions 62 to 73 (DFGLLGTTLLNL) are interaction with the inner capsid protein VP2. His-153 provides a ligand contact to Zn(2+). Residues Asn-266 and Asp-286 each contribute to the Ca(2+) site.

This sequence belongs to the rotavirus VP6 family. Homotrimer. Interacts with the inner capsid protein VP2. Interacts with the outer capsid glycoprotein VP7. Interacts with the outer capsid protein VP5*. In terms of processing, the N-terminus is blocked. Post-translationally, sumoylated with SUMO1 and SUMO2. Sumoylation of viral proteins seems to have a positive role on viral replication.

The protein resides in the virion. Intermediate capsid protein that self assembles to form an icosahedral capsid with a T=13 symmetry, which consists of 230 trimers of VP6, with channels at each of its five-fold vertices. This capsid constitutes the middle concentric layer of the viral mature particle. The innermost VP2 capsid and the intermediate VP6 capsid remain intact following cell entry to protect the dsRNA from degradation and to prevent unfavorable antiviral responses in the host cell during all the replication cycle of the virus. Nascent transcripts are transcribed within the structural confines of this double-layered particle (DLP) and are extruded through the channels at the five-fold axes. VP6 is required for the transcription activity of the DLP. This chain is Intermediate capsid protein VP6, found in Rotavirus A (isolate RVA/Human/United States/WI61/1983/G9P1A[8]) (RV-A).